The following is a 431-amino-acid chain: 3-phosphoshikimate 1-carboxyvinyltransferase (431 aa).

The 3-phosphoshikimate site is built by Lys23, Ser24, and Arg28. Lys23 provides a ligand contact to phosphoenolpyruvate. Residues Gly96 and Arg124 each coordinate phosphoenolpyruvate. 3-phosphoshikimate-binding residues include Ser169, Gln171, Asp317, and Lys344. Gln171 is a phosphoenolpyruvate binding site. Asp317 functions as the Proton acceptor in the catalytic mechanism. Arg348 and Arg390 together coordinate phosphoenolpyruvate.

Belongs to the EPSP synthase family. Monomer.

The protein resides in the cytoplasm. The enzyme catalyses 3-phosphoshikimate + phosphoenolpyruvate = 5-O-(1-carboxyvinyl)-3-phosphoshikimate + phosphate. It participates in metabolic intermediate biosynthesis; chorismate biosynthesis; chorismate from D-erythrose 4-phosphate and phosphoenolpyruvate: step 6/7. Its function is as follows. Catalyzes the transfer of the enolpyruvyl moiety of phosphoenolpyruvate (PEP) to the 5-hydroxyl of shikimate-3-phosphate (S3P) to produce enolpyruvyl shikimate-3-phosphate and inorganic phosphate. The chain is 3-phosphoshikimate 1-carboxyvinyltransferase from Syntrophotalea carbinolica (strain DSM 2380 / NBRC 103641 / GraBd1) (Pelobacter carbinolicus).